We begin with the raw amino-acid sequence, 256 residues long: 4-hydroxy-tetrahydrodipicolinate reductase (256 aa).

NAD(+) contacts are provided by residues G12–V17, D39, G86–T88, and A110–Y113. The Proton donor/acceptor role is filled by H144. Residue H145 participates in (S)-2,3,4,5-tetrahydrodipicolinate binding. K148 acts as the Proton donor in catalysis. G154–T155 contributes to the (S)-2,3,4,5-tetrahydrodipicolinate binding site.

It belongs to the DapB family.

It is found in the cytoplasm. It catalyses the reaction (S)-2,3,4,5-tetrahydrodipicolinate + NAD(+) + H2O = (2S,4S)-4-hydroxy-2,3,4,5-tetrahydrodipicolinate + NADH + H(+). It carries out the reaction (S)-2,3,4,5-tetrahydrodipicolinate + NADP(+) + H2O = (2S,4S)-4-hydroxy-2,3,4,5-tetrahydrodipicolinate + NADPH + H(+). The protein operates within amino-acid biosynthesis; L-lysine biosynthesis via DAP pathway; (S)-tetrahydrodipicolinate from L-aspartate: step 4/4. Functionally, catalyzes the conversion of 4-hydroxy-tetrahydrodipicolinate (HTPA) to tetrahydrodipicolinate. This Gluconacetobacter diazotrophicus (strain ATCC 49037 / DSM 5601 / CCUG 37298 / CIP 103539 / LMG 7603 / PAl5) protein is 4-hydroxy-tetrahydrodipicolinate reductase.